The chain runs to 237 residues: Lectin alpha chain (237 aa).

Residues glutamate 8 and aspartate 10 each coordinate Mn(2+). Positions 10, 12, 14, and 19 each coordinate Ca(2+). Tyrosine 12 serves as a coordination point for a carbohydrate. Mn(2+)-binding residues include aspartate 19 and histidine 24. 99–100 (LY) is a binding site for a carbohydrate. Position 208 (aspartate 208) interacts with Ca(2+). Residue arginine 228 participates in a carbohydrate binding.

This sequence belongs to the leguminous lectin family. In terms of assembly, equilibrium between homodimer and homotetramer. Oligomerization is pH-dependent with homotetramers forming at pH 6.5 and above. Post-translationally, the beta and gamma chains are produced by partial proteolytic processing of the lectin alpha chain by an asparaginyl endopeptidase. Mixture of 60% alpha lectin and 40% of its beta and gamma proteolytic fragments. Seed.

The protein resides in the vacuole. It is found in the aleurone grain. Functionally, D-mannose/D-glucose-binding lectin. Has anti-inflammatory activity in rats. Induces histamine release in mast cells from hamster and rat. Induces lymphocyte proliferation and IFNG production. Shows toxicity against the aquatic snail B.glabrata at concentrations higher than 20 ug/ml. The protein is Lectin alpha chain of Dioclea virgata.